Reading from the N-terminus, the 375-residue chain is G-protein coupled estrogen receptor 1 (375 aa).

An N-acetylmethionine modification is found at Met-1. Residues 1 to 62 lie on the Extracellular side of the membrane; it reads MAATTPAQDV…QQYVIALFLS (62 aa). Residues Asn-32 and Asn-44 are each glycosylated (N-linked (GlcNAc...) asparagine). A helical membrane pass occupies residues 63–84; that stretch reads CLYTIFLFPIGFVGNILILVVN. Residues 85-96 are Cytoplasmic-facing; the sequence is ISFREKMTIPDL. Residues 97-120 form a helical membrane-spanning segment; sequence YFINLAAADLILVADSLIEVFNLD. Over 121 to 132 the chain is Extracellular; that stretch reads EQYYDIAVLCTF. Residues Cys-130 and Cys-207 are joined by a disulfide bond. A helical transmembrane segment spans residues 133 to 153; sequence MSLFLQINMYSSVFFLTWMSF. Residues 154–175 lie on the Cytoplasmic side of the membrane; the sequence is DRYLALAKAMRCGLFRTKHHAR. The helical transmembrane segment at 176 to 194 threads the bilayer; that stretch reads LSCGLIWMASVSATLVPFT. Residues 195–220 lie on the Extracellular side of the membrane; that stretch reads AVHLRHTEEACFCFADVREVQWLEVT. The helical transmembrane segment at 221-236 threads the bilayer; it reads LGFIVPFAIIGLCYSL. The Cytoplasmic portion of the chain corresponds to 237 to 259; sequence IVRALIRAHRHRGLRPRRQKALR. The chain crosses the membrane as a helical span at residues 260-280; that stretch reads MIFAVVLVFFICWLPENVFIS. Over 281 to 306 the chain is Extracellular; sequence VHLLQWAQPGDTPCKQSFRHAYPLTG. A helical transmembrane segment spans residues 307 to 327; it reads HIVNLAAFSNSCLSPLIYSFL. The Cytoplasmic segment spans residues 328-375; that stretch reads GETFRDKLRLYVAQKTSLPALNRFCHATLKAVIPDSTEQSDVKFSSAV.

The protein belongs to the G-protein coupled receptor 1 family. As to quaternary structure, homodimer. Heterodimer; heterodimerizes with other G-protein-coupled receptor (GPCRs) like CRHR1, HTR1A and PAQR8. Interacts with RAMP3; the interaction confers proper subcellular localization and function in cardioprotection. Interacts with KRT7 and KRT8. Interacts with EGFR; the interaction increases after agonist-induced stimulation in cancer-associated fibroblasts (CAF). Interacts with EGFR and ESR1. Interacts (via C-terminus tail motif) with DLG4 (via N-terminus tandem pair of PDZ domains); the interaction is direct and induces the increase of GPER1 protein levels residing at the plasma membrane surface in a estradiol-independent manner. In terms of processing, ubiquitinated; ubiquitination occurs at the plasma membrane and leads to proteasome-mediated degradation. Post-translationally, glycosylated. As to expression, expressed in the brain. Expressed in neurons of the hippocampus, hypothalamic paraventricular nucleus (PVN), supraoptic nucleus (SON) and the median eminence. Expressed in magnocellular neurosecretory cells (MNCs) which secrete oxytocin but not in MNCs which secrete vasopressin. Expressed in glial cells. Expressed in the nucleus ambiguous. Expressed in epithelial cells, in pachytene spermatocytes (PS) (at protein level). Expressed strongly in vascular endothelial cells and poorly in vascular smooth muscle cells (VSMC). Expressed in the brain, lung, pituitary gland, adrenal medulla, renal pelvis and ovary. Expressed in CA1 hippocampus. Expressed weakly in heart, skeletal muscle and kidney.

It localises to the nucleus. The protein resides in the cytoplasm. The protein localises to the perinuclear region. It is found in the cytoskeleton. Its subcellular location is the cytoplasmic vesicle membrane. It localises to the cell membrane. The protein resides in the basolateral cell membrane. The protein localises to the endoplasmic reticulum membrane. It is found in the early endosome. Its subcellular location is the recycling endosome. It localises to the golgi apparatus. The protein resides in the trans-Golgi network. The protein localises to the golgi apparatus membrane. It is found in the cell projection. Its subcellular location is the dendrite. It localises to the dendritic spine membrane. The protein resides in the axon. The protein localises to the postsynaptic density. It is found in the mitochondrion membrane. G-protein coupled estrogen receptor that binds to 17-beta-estradiol (E2) with high affinity, leading to rapid and transient activation of numerous intracellular signaling pathways. Stimulates cAMP production, calcium mobilization and tyrosine kinase Src inducing the release of heparin-bound epidermal growth factor (HB-EGF) and subsequent transactivation of the epidermal growth factor receptor (EGFR), activating downstream signaling pathways such as PI3K/Akt and ERK/MAPK. Mediates pleiotropic functions among others in the cardiovascular, endocrine, reproductive, immune and central nervous systems. Has a role in cardioprotection by reducing cardiac hypertrophy and perivascular fibrosis in a RAMP3-dependent manner. Regulates arterial blood pressure by stimulating vasodilation and reducing vascular smooth muscle and microvascular endothelial cell proliferation. Plays a role in blood glucose homeostasis contributing to the insulin secretion response by pancreatic beta cells. Triggers mitochondrial apoptosis during pachytene spermatocyte differentiation. Stimulates uterine epithelial cell proliferation. Enhances uterine contractility in response to oxytocin. Contributes to thymic atrophy by inducing apoptosis. Attenuates TNF-mediated endothelial expression of leukocyte adhesion molecules. Promotes neuritogenesis in developing hippocampal neurons. Plays a role in acute neuroprotection against NMDA-induced excitotoxic neuronal death. Increases firing activity and intracellular calcium oscillations in luteinizing hormone-releasing hormone (LHRH) neurons. Inhibits early osteoblast proliferation at growth plate during skeletal development. Inhibits mature adipocyte differentiation and lipid accumulation. Involved in the recruitment of beta-arrestin 2 ARRB2 at the plasma membrane in epithelial cells. Also functions as a receptor for aldosterone mediating rapid regulation of vascular contractibility through the PI3K/ERK signaling pathway. Involved in cancer progression regulation. Stimulates cancer-associated fibroblast (CAF) proliferation by a rapid genomic response through the EGFR/ERK transduction pathway. Associated with EGFR, may act as a transcription factor activating growth regulatory genes (c-fos, cyclin D1). Promotes integrin alpha-5/beta-1 and fibronectin (FN) matrix assembly in breast cancer cells. In Rattus norvegicus (Rat), this protein is G-protein coupled estrogen receptor 1 (Gper1).